The primary structure comprises 237 residues: Purine nucleoside phosphorylase DeoD-type (237 aa).

Residue histidine 4 participates in a purine D-ribonucleoside binding. Phosphate-binding positions include glycine 20, arginine 24, arginine 43, and 87-90; that span reads RVGS. Residues 179–181 and 203–204 each bind a purine D-ribonucleoside; these read EME and SD. The active-site Proton donor is aspartate 204.

It belongs to the PNP/UDP phosphorylase family. As to quaternary structure, homohexamer; trimer of homodimers.

The catalysed reaction is a purine D-ribonucleoside + phosphate = a purine nucleobase + alpha-D-ribose 1-phosphate. The enzyme catalyses a purine 2'-deoxy-D-ribonucleoside + phosphate = a purine nucleobase + 2-deoxy-alpha-D-ribose 1-phosphate. In terms of biological role, catalyzes the reversible phosphorolytic breakdown of the N-glycosidic bond in the beta-(deoxy)ribonucleoside molecules, with the formation of the corresponding free purine bases and pentose-1-phosphate. This chain is Purine nucleoside phosphorylase DeoD-type, found in Dichelobacter nodosus (strain VCS1703A).